Consider the following 82-residue polypeptide: Small ribosomal subunit protein uS17 (82 aa).

It belongs to the universal ribosomal protein uS17 family. As to quaternary structure, part of the 30S ribosomal subunit.

In terms of biological role, one of the primary rRNA binding proteins, it binds specifically to the 5'-end of 16S ribosomal RNA. This is Small ribosomal subunit protein uS17 from Aeromonas salmonicida (strain A449).